Consider the following 59-residue polypeptide: Small ribosomal subunit protein bS21 (59 aa).

Residues 36 to 59 (EHYEKPSVKRKKKAEAAKRNKSKF) are disordered. Positions 43 to 59 (VKRKKKAEAAKRNKSKF) are enriched in basic residues.

The protein belongs to the bacterial ribosomal protein bS21 family.

In Alkaliphilus oremlandii (strain OhILAs) (Clostridium oremlandii (strain OhILAs)), this protein is Small ribosomal subunit protein bS21.